We begin with the raw amino-acid sequence, 322 residues long: Corticotropin-releasing factor-binding protein (322 aa).

A signal peptide spans methionine 1–arginine 24. Intrachain disulfides connect cysteine 60–cysteine 81, cysteine 104–cysteine 141, cysteine 183–cysteine 205, cysteine 237–cysteine 264, and cysteine 277–cysteine 318. The N-linked (GlcNAc...) asparagine glycan is linked to asparagine 204.

The protein belongs to the CRF-binding protein family.

It localises to the secreted. Binds CRF and inactivates it. May prevent inappropriate pituitary-adrenal stimulation in pregnancy. The sequence is that of Corticotropin-releasing factor-binding protein (Crhbp) from Mus musculus (Mouse).